Reading from the N-terminus, the 436-residue chain is 3-ketoacyl-CoA thiolase (436 aa).

Catalysis depends on C99, which acts as the Acyl-thioester intermediate. Residues H392 and C422 each act as proton acceptor in the active site.

The protein belongs to the thiolase-like superfamily. Thiolase family. Heterotetramer of two alpha chains (FadJ) and two beta chains (FadI).

The protein resides in the cytoplasm. The catalysed reaction is an acyl-CoA + acetyl-CoA = a 3-oxoacyl-CoA + CoA. It participates in lipid metabolism; fatty acid beta-oxidation. In terms of biological role, catalyzes the final step of fatty acid oxidation in which acetyl-CoA is released and the CoA ester of a fatty acid two carbons shorter is formed. The sequence is that of 3-ketoacyl-CoA thiolase from Salmonella paratyphi C (strain RKS4594).